Here is a 962-residue protein sequence, read N- to C-terminus: UBP9-binding protein bun107 (962 aa).

WD repeat units follow at residues 25–69 (DANC…GKAS), 77–116 (AHSAWVNDIALTHDSEGVISCSSDSTVKLWKPHVLNASCL), 121–162 (EHTD…EVMR), 172–211 (VVGPRSGVYSLAANNNIIANGGLQKDIQLWDCVSKKRITD), 214–253 (GHTDNVRDILISDDGRTILTASSDATIKLWSLRAQKCLFS), and 302–339 (KQDAPVSDIVARQSFIWSTSRDGSILRWKDEPLFNQDV). Over residues 568 to 578 (SPLRIRSRPSP) the composition is skewed to low complexity. Disordered regions lie at residues 568–615 (SPLR…QIPS) and 702–758 (RAAS…PREL). The segment covering 707–723 (RVFSTGTSVTSPQALSK) has biased composition (polar residues). Phosphoserine is present on serine 717. Positions 724-738 (TNNTVNNAANTENNT) are enriched in low complexity.

As to quaternary structure, interacts with ubp9 and bun62.

The protein resides in the cytoplasm. Its subcellular location is the cell tip. Functionally, required for the ubp9 recruitment to septa and cell tips but also for its enzymatic activity at these specific locations. The protein is UBP9-binding protein bun107 (bun107) of Schizosaccharomyces pombe (strain 972 / ATCC 24843) (Fission yeast).